The chain runs to 446 residues: Maturase K (446 aa).

It belongs to the intron maturase 2 family. MatK subfamily.

The protein localises to the plastid. The protein resides in the chloroplast. Usually encoded in the trnK tRNA gene intron. Probably assists in splicing its own and other chloroplast group II introns. This is Maturase K from Phalaenopsis aphrodite subsp. formosana (Moth orchid).